A 205-amino-acid polypeptide reads, in one-letter code: Probable transcription factor Ken (205 aa).

3 consecutive C2H2-type zinc fingers follow at residues 106 to 128, 134 to 157, and 173 to 196; these read YRCE…LRVH, FACR…CSVH, and YSCC…SGHH.

It localises to the nucleus. In terms of biological role, probable transcription factor, which is required for terminalia development. The protein is Probable transcription factor Ken (ken) of Drosophila yakuba (Fruit fly).